The following is an 84-amino-acid chain: Figainin 2 (84 aa).

A signal peptide spans Met-1–Cys-22. Over residues Glu-23 to Glu-39 the composition is skewed to basic and acidic residues. The tract at residues Glu-23–Lys-53 is disordered. The propeptide occupies Glu-23 to Glu-54. Residues Glu-40 to Asn-49 show a composition bias toward acidic residues.

Expressed by the skin glands.

The protein localises to the secreted. In terms of biological role, antimicrobial peptide that displays antibacterial, antiprotozoal, and antiviral activity. Exhibits antibacterial activity against the Gram-positive bacteria S.epidermidis ATCC 12228 (MIC=4 uM), E.casseliflavus ATCC 700327 (MIC=4 uM), S.aureus ATCC 25923 (MIC=8 uM) and E.faecalis ATCC 29212 (MIC=8 uM), and the Gram-negative bacteria E.coli ATCC 25922 (MIC=8 uM), K.pneumoniae ATCC 13883 (MIC=8 uM), the multi-resistant clinical isolate strain K.pneumoniae carbapanemase (KPC) MR (MIC=16 uM), and P.aeruginosa ATCC 27853 (MIC=32 uM). Displays antiprotozoal activity against the epimastigote form of T.cruzi (IC(50)=6.32 uM). Does not show antimicrobial against the fungi C.albicans ATCC 90028 and C.parapsilosis ATCC 22019. Displays antiviral activity against the human viruses chikungunya (EC(50)=17.9 uM), Dengue serotype 4 (EC(50)=20.8 uM) and Yellow Fever (EC(50)=21.8 uM). Shows moderate cytolytic activity against human erythrocytes (HC(50)=48.9 uM), and activates the oxidative burst in human neutrophils. Also displays anti-proliferative effects against MCF-7 breast cancer cells (IC(50)=15.3 uM) and B16F10 murine melanoma cells (IC(50)=12.8 uM). This is Figainin 2 from Boana raniceps (Chaco tree frog).